We begin with the raw amino-acid sequence, 168 residues long: CDP-archaeol synthase (168 aa).

Helical transmembrane passes span 4-24 (IFEAFWYILPAYFANSSPVVL), 51-71 (GFFGGITVGTVVGTIQHLMFP), 81-101 (VGVAFLLSLGALVGDLIGSFI), 112-132 (PAVGLDQWGFLISALCFAYPL), and 138-158 (GEVLFLLVVTPVIHWLANVFA).

It belongs to the CDP-archaeol synthase family. Requires Mg(2+) as cofactor.

It is found in the cell membrane. The catalysed reaction is 2,3-bis-O-(geranylgeranyl)-sn-glycerol 1-phosphate + CTP + H(+) = CDP-2,3-bis-O-(geranylgeranyl)-sn-glycerol + diphosphate. It functions in the pathway membrane lipid metabolism; glycerophospholipid metabolism. Catalyzes the formation of CDP-2,3-bis-(O-geranylgeranyl)-sn-glycerol (CDP-archaeol) from 2,3-bis-(O-geranylgeranyl)-sn-glycerol 1-phosphate (DGGGP) and CTP. This reaction is the third ether-bond-formation step in the biosynthesis of archaeal membrane lipids. The polypeptide is CDP-archaeol synthase (Pyrococcus abyssi (strain GE5 / Orsay)).